The chain runs to 52 residues: Transmembrane protein ORF52 (52 aa).

2 consecutive transmembrane segments (helical) span residues 11 to 31 (AFLG…EIIT) and 32 to 52 (FMAL…GLFV).

The protein localises to the host membrane. The polypeptide is Transmembrane protein ORF52 (Acidianus filamentous virus 1 (isolate United States/Yellowstone) (AFV-1)).